The chain runs to 143 residues: Transcription antitermination protein NusB (143 aa).

This sequence belongs to the NusB family.

In terms of biological role, involved in transcription antitermination. Required for transcription of ribosomal RNA (rRNA) genes. Binds specifically to the boxA antiterminator sequence of the ribosomal RNA (rrn) operons. The sequence is that of Transcription antitermination protein NusB from Buchnera aphidicola subsp. Acyrthosiphon pisum (strain APS) (Acyrthosiphon pisum symbiotic bacterium).